A 104-amino-acid polypeptide reads, in one-letter code: PTS system lactose-specific EIIA component (104 aa).

The PTS EIIA type-3 domain occupies 1–102 (MNRDEVQLLG…MKHLIELYKK (102 aa)). The active-site Tele-phosphohistidine intermediate is His-78. Phosphohistidine; by HPr is present on His-78. Position 81 (Asp-81) interacts with Mg(2+).

Homotrimer. It depends on Mg(2+) as a cofactor.

Its subcellular location is the cytoplasm. Functionally, the phosphoenolpyruvate-dependent sugar phosphotransferase system (sugar PTS), a major carbohydrate active transport system, catalyzes the phosphorylation of incoming sugar substrates concomitantly with their translocation across the cell membrane. The enzyme II LacEF PTS system is involved in lactose transport. This is PTS system lactose-specific EIIA component from Staphylococcus epidermidis (strain ATCC 35984 / DSM 28319 / BCRC 17069 / CCUG 31568 / BM 3577 / RP62A).